A 327-amino-acid polypeptide reads, in one-letter code: Cytochrome c biogenesis protein CcsA (327 aa).

A run of 8 helical transmembrane segments spans residues isoleucine 13–leucine 33, glycine 46–glycine 66, leucine 73–phenylalanine 93, leucine 101–leucine 121, methionine 145–isoleucine 165, isoleucine 233–asparagine 253, tryptophan 262–isoleucine 282, and alanine 294–leucine 314.

Belongs to the CcmF/CycK/Ccl1/NrfE/CcsA family. As to quaternary structure, may interact with Ccs1.

It localises to the plastid. The protein resides in the chloroplast thylakoid membrane. Its function is as follows. Required during biogenesis of c-type cytochromes (cytochrome c6 and cytochrome f) at the step of heme attachment. The polypeptide is Cytochrome c biogenesis protein CcsA (Lobularia maritima (Sweet alyssum)).